A 119-amino-acid polypeptide reads, in one-letter code: Ethylene-responsive proteinase inhibitor 1 (119 aa).

A signal peptide spans 1–27 (MEANKSMVKLVAFLIILVSSCFQSLTA). The propeptide occupies 28–48 (QDLEIEVSDGLNVLQVHDVSQ).

The protein belongs to the protease inhibitor I13 (potato type I serine protease inhibitor) family.

It is found in the secreted. This chain is Ethylene-responsive proteinase inhibitor 1, found in Solanum lycopersicum (Tomato).